A 168-amino-acid chain; its full sequence is Phosphopantetheine adenylyltransferase (168 aa).

Substrate is bound at residue threonine 14. Residues 14 to 15 (TF) and histidine 22 contribute to the ATP site. Residues lysine 46, leucine 78, and arginine 92 each coordinate substrate. Residues 93–95 (GLR), glutamate 103, and 128–134 (YSFISSS) each bind ATP.

The protein belongs to the bacterial CoaD family. Homohexamer. Requires Mg(2+) as cofactor.

The protein localises to the cytoplasm. The enzyme catalyses (R)-4'-phosphopantetheine + ATP + H(+) = 3'-dephospho-CoA + diphosphate. Its pathway is cofactor biosynthesis; coenzyme A biosynthesis; CoA from (R)-pantothenate: step 4/5. Reversibly transfers an adenylyl group from ATP to 4'-phosphopantetheine, yielding dephospho-CoA (dPCoA) and pyrophosphate. In Xanthomonas oryzae pv. oryzae (strain MAFF 311018), this protein is Phosphopantetheine adenylyltransferase.